Here is a 468-residue protein sequence, read N- to C-terminus: UDP-N-acetylmuramate--L-alanine ligase (468 aa).

Position 114–120 (114–120) interacts with ATP; sequence GTHGKTT.

The protein belongs to the MurCDEF family.

It localises to the cytoplasm. The enzyme catalyses UDP-N-acetyl-alpha-D-muramate + L-alanine + ATP = UDP-N-acetyl-alpha-D-muramoyl-L-alanine + ADP + phosphate + H(+). It functions in the pathway cell wall biogenesis; peptidoglycan biosynthesis. Functionally, cell wall formation. The protein is UDP-N-acetylmuramate--L-alanine ligase of Methylorubrum extorquens (strain PA1) (Methylobacterium extorquens).